We begin with the raw amino-acid sequence, 341 residues long: Holliday junction branch migration complex subunit RuvB (341 aa).

The large ATPase domain (RuvB-L) stretch occupies residues 1 to 180; that stretch reads MAKSHTLNPE…FGIQLRLDYY (180 aa). ATP-binding residues include L19, R20, G61, K64, T65, T66, R170, Y180, and R217. T65 provides a ligand contact to Mg(2+). The interval 181-251 is small ATPAse domain (RuvB-S); that stretch reads NDEEMKEIVL…LCLKAFEKMG (71 aa). Residues 254–341 form a head domain (RuvB-H) region; the sequence is DLGLDGMDRQ…ENHGQDPTLF (88 aa). 2 residues coordinate DNA: R309 and R314.

Belongs to the RuvB family. In terms of assembly, homohexamer. Forms an RuvA(8)-RuvB(12)-Holliday junction (HJ) complex. HJ DNA is sandwiched between 2 RuvA tetramers; dsDNA enters through RuvA and exits via RuvB. An RuvB hexamer assembles on each DNA strand where it exits the tetramer. Each RuvB hexamer is contacted by two RuvA subunits (via domain III) on 2 adjacent RuvB subunits; this complex drives branch migration. In the full resolvosome a probable DNA-RuvA(4)-RuvB(12)-RuvC(2) complex forms which resolves the HJ.

It is found in the cytoplasm. It carries out the reaction ATP + H2O = ADP + phosphate + H(+). In terms of biological role, the RuvA-RuvB-RuvC complex processes Holliday junction (HJ) DNA during genetic recombination and DNA repair, while the RuvA-RuvB complex plays an important role in the rescue of blocked DNA replication forks via replication fork reversal (RFR). RuvA specifically binds to HJ cruciform DNA, conferring on it an open structure. The RuvB hexamer acts as an ATP-dependent pump, pulling dsDNA into and through the RuvAB complex. RuvB forms 2 homohexamers on either side of HJ DNA bound by 1 or 2 RuvA tetramers; 4 subunits per hexamer contact DNA at a time. Coordinated motions by a converter formed by DNA-disengaged RuvB subunits stimulates ATP hydrolysis and nucleotide exchange. Immobilization of the converter enables RuvB to convert the ATP-contained energy into a lever motion, pulling 2 nucleotides of DNA out of the RuvA tetramer per ATP hydrolyzed, thus driving DNA branch migration. The RuvB motors rotate together with the DNA substrate, which together with the progressing nucleotide cycle form the mechanistic basis for DNA recombination by continuous HJ branch migration. Branch migration allows RuvC to scan DNA until it finds its consensus sequence, where it cleaves and resolves cruciform DNA. The polypeptide is Holliday junction branch migration complex subunit RuvB (Leptospira borgpetersenii serovar Hardjo-bovis (strain L550)).